The primary structure comprises 1205 residues: Partitioning defective 3 homolog B (1205 aa).

Disordered regions lie at residues 83-104 (EPLH…PDAF) and 137-165 (VRRS…SLKL). Ser100 is modified (phosphoserine). Residues 201–289 (TRTVEISGEG…SPSVLLHVLP (89 aa)) form the PDZ 1 domain. The segment at 318–374 (VPPPVHGKSGLKTANLTGTDSPETDASASLQQNKSPRVPRLGGKPSSPSLSPLMGFG) is disordered. Positions 329 to 352 (KTANLTGTDSPETDASASLQQNKS) are enriched in polar residues. Ser346, Ser352, and Ser368 each carry phosphoserine. Low complexity predominate over residues 356 to 374 (PRLGGKPSSPSLSPLMGFG). PDZ domains follow at residues 383–468 (KIDL…VIAR) and 498–585 (EIPL…GMIQ). Residues Ser635, Ser710, Ser728, Ser730, Ser746, Ser749, and Ser801 each carry the phosphoserine modification. Residues 707-743 (ASKSMDLVPDESKVHSLAGQKSESPSKDFGPTLGLKK) are disordered. Disordered regions lie at residues 784–921 (AIDK…KHQE) and 1111–1205 (PYYP…TAAV). Residues 806–822 (HSGQGALNCESAPQGNS) are compositionally biased toward polar residues. Basic and acidic residues-rich tracts occupy residues 838–865 (KEKE…DPER) and 881–921 (KKED…KHQE). Ser1184 carries the post-translational modification Phosphoserine.

The protein belongs to the PAR3 family. In terms of assembly, interacts with PARD6B. Interacts with INSC/inscuteable. In terms of tissue distribution, highly expressed in kidney, lung and skeletal muscle. Expressed at intermediate levels in brain, heart, placenta, liver and pancreas. Isoform 1 is predominant, while isoform 2 and isoform 3 are expressed at lower levels.

It is found in the endomembrane system. It localises to the cell junction. The protein resides in the tight junction. Its function is as follows. Putative adapter protein involved in asymmetrical cell division and cell polarization processes. May play a role in the formation of epithelial tight junctions. The protein is Partitioning defective 3 homolog B (PARD3B) of Homo sapiens (Human).